The chain runs to 202 residues: Thymidylate kinase (202 aa).

Residue 7–14 (GIDGSGKT) participates in ATP binding.

Belongs to the thymidylate kinase family.

The catalysed reaction is dTMP + ATP = dTDP + ADP. Phosphorylation of dTMP to form dTDP in both de novo and salvage pathways of dTTP synthesis. In Ehrlichia ruminantium (strain Gardel), this protein is Thymidylate kinase.